Here is a 181-residue protein sequence, read N- to C-terminus: ATP synthase subunit b, chloroplastic (181 aa).

The helical transmembrane segment at 28–50 threads the bilayer; sequence IINLSVVLGVLIYFGKGVLSNLL.

This sequence belongs to the ATPase B chain family. As to quaternary structure, F-type ATPases have 2 components, F(1) - the catalytic core - and F(0) - the membrane proton channel. F(1) has five subunits: alpha(3), beta(3), gamma(1), delta(1), epsilon(1). F(0) has four main subunits: a(1), b(1), b'(1) and c(10-14). The alpha and beta chains form an alternating ring which encloses part of the gamma chain. F(1) is attached to F(0) by a central stalk formed by the gamma and epsilon chains, while a peripheral stalk is formed by the delta, b and b' chains.

It is found in the plastid. The protein resides in the chloroplast thylakoid membrane. F(1)F(0) ATP synthase produces ATP from ADP in the presence of a proton or sodium gradient. F-type ATPases consist of two structural domains, F(1) containing the extramembraneous catalytic core and F(0) containing the membrane proton channel, linked together by a central stalk and a peripheral stalk. During catalysis, ATP synthesis in the catalytic domain of F(1) is coupled via a rotary mechanism of the central stalk subunits to proton translocation. In terms of biological role, component of the F(0) channel, it forms part of the peripheral stalk, linking F(1) to F(0). This chain is ATP synthase subunit b, chloroplastic, found in Cryptomeria japonica (Japanese cedar).